Here is a 56-residue protein sequence, read N- to C-terminus: Small ribosomal subunit protein uS14 (56 aa).

Zn(2+) contacts are provided by cysteine 21, cysteine 24, cysteine 39, and cysteine 42.

This sequence belongs to the universal ribosomal protein uS14 family. Component of the 40S small ribosomal subunit. It depends on Zn(2+) as a cofactor.

It localises to the cytoplasm. Its subcellular location is the cytosol. It is found in the rough endoplasmic reticulum. In terms of biological role, component of the small ribosomal subunit. The ribosome is a large ribonucleoprotein complex responsible for the synthesis of proteins in the cell. The chain is Small ribosomal subunit protein uS14 (rps29) from Hippocampus comes (Tiger tail seahorse).